We begin with the raw amino-acid sequence, 727 residues long: Endothelin-converting enzyme homolog (727 aa).

Residues 1–44 (MSFNFSRYSGAYTTTFSFLLLALLIVSAVLLSRPYAPALLHAEE) lie on the Cytoplasmic side of the membrane. The helical; Signal-anchor for type II membrane protein transmembrane segment at 45–65 (AYCVSMSCVTAAASVLSLMDA) threads the bilayer. One can recognise a Peptidase M13 domain in the interval 46–727 (YCVSMSCVTA…MNPVHKCEVW (682 aa)). Intrachain disulfides connect cysteine 47/cysteine 52, cysteine 70/cysteine 712, cysteine 78/cysteine 672, cysteine 134/cysteine 392, and cysteine 601/cysteine 724. Topologically, residues 66-727 (TADPCSDFYQ…MNPVHKCEVW (662 aa)) are extracellular. N-linked (GlcNAc...) asparagine glycosylation is found at asparagine 138, asparagine 160, asparagine 164, asparagine 169, asparagine 222, asparagine 309, asparagine 337, asparagine 340, and asparagine 511. Zn(2+) is bound at residue histidine 564. Residue glutamate 565 is part of the active site. Residue histidine 568 coordinates Zn(2+). Residues asparagine 589 and asparagine 608 are each glycosylated (N-linked (GlcNAc...) asparagine). Zn(2+) is bound at residue glutamate 624. The active-site Proton donor is the aspartate 628. N-linked (GlcNAc...) asparagine glycosylation occurs at asparagine 656.

This sequence belongs to the peptidase M13 family. Requires Zn(2+) as cofactor. Highly expressed in brain and midgut, and to a lesser extent in fat body, ovaries, testes and haemocytes.

It is found in the cell membrane. This chain is Endothelin-converting enzyme homolog, found in Locusta migratoria (Migratory locust).